We begin with the raw amino-acid sequence, 366 residues long: MGYAAVPPVERGSCSAGANNRDITFDFVKGILIILVVLGHLLQLVIYRNTDNFWLSPYFKAIYMFHMPLFMAISGYLASGTILRTSFCRAVGDRAVQLLIPMLFWCALIETAKLAAFFHFSGVTAGLLDFSRELVGTYWFLWAVLASFLLTKLFAAFNLLSKWILCASAIVIALMPITLSIVPLLRYTYPFFCLGFLFAQTIEEQANTMLRHKSLLMFSCWAVACLCFLDWGRDTYAYNNLVLVHDAQSAKQVLLMFTGSAAAAAVAAQSLFHCWRVLCSTRLARLVAVELGQSTLLLYLVQGAVFRLTDLIQFGELWDGKTRIVVASAIGAAIFGAATAVLWIVNDLGYVSRIIVGAPRRLKRSS.

The next 9 helical transmembrane spans lie at 27-47 (FVKG…LVIY), 62-82 (IYMF…SGTI), 98-118 (LLIP…AAFF), 140-160 (FLWA…FNLL), 164-184 (ILCA…IVPL), 212-232 (HKSL…LDWG), 253-273 (VLLM…SLFH), 286-306 (LVAV…GAVF), and 324-344 (IVVA…VLWI).

It belongs to the acyltransferase 3 family.

The protein resides in the cell membrane. Its function is as follows. Thought to be an acetyltransferase that modifies the fucose of the nod factor. The polypeptide is Nodulation protein NolL (nolL) (Sinorhizobium fredii (strain NBRC 101917 / NGR234)).